The chain runs to 167 residues: CASP-like protein UU1 (167 aa).

Residues 1 to 17 (MVELESQEAVTVASTAD) lie on the Cytoplasmic side of the membrane. The helical transmembrane segment at 18-38 (IAVDVSLRLLAAATSLASAVV) threads the bilayer. At 39-54 (VAANHQQRWGVRVDFT) the chain is on the extracellular side. The chain crosses the membrane as a helical span at residues 55-75 (LFQVWIGFVAVNLVCTVYAAA). Residues 76–94 (TAAAARKAMGRWWLHHADA) are Cytoplasmic-facing. A helical membrane pass occupies residues 95-115 (VVVNLEAAATAGAGAIGSIAM). Residues 116 to 135 (WGNEASGWYAVCRLYRRYCN) lie on the Extracellular side of the membrane. The helical transmembrane segment at 136-156 (AGAAALALSLAAVLLLGVACA) threads the bilayer. The Cytoplasmic portion of the chain corresponds to 157-167 (RSRYPKMPPTT).

The protein belongs to the Casparian strip membrane proteins (CASP) family. As to quaternary structure, homodimer and heterodimers.

The protein localises to the cell membrane. The chain is CASP-like protein UU1 from Oryza sativa subsp. indica (Rice).